A 219-amino-acid chain; its full sequence is MTQDEMKKAAGWAALEYVEKDSIVGVGTGSTVNHFIDALATMKADIEGAVSSSEASTEKMKALGIPVFDLNSVDQLSVYVDGADEINGHMDMIKGGGAALTREKIVAAVADKFVCIVDNTKEVEVLGEFPLPVEVIPMARSYVARELVKLGGDPVYREGVVTDNGNVILDVYNMKIFNPKALEEQINQIVGVVTNGLFANRGADVLLVGTPEGVKTVKP.

Substrate is bound by residues 28–31, 81–84, and 94–97; these read TGST, DGAD, and KGGG. Glutamate 103 functions as the Proton acceptor in the catalytic mechanism. Lysine 121 lines the substrate pocket.

The protein belongs to the ribose 5-phosphate isomerase family. In terms of assembly, homodimer.

The enzyme catalyses aldehydo-D-ribose 5-phosphate = D-ribulose 5-phosphate. It functions in the pathway carbohydrate degradation; pentose phosphate pathway; D-ribose 5-phosphate from D-ribulose 5-phosphate (non-oxidative stage): step 1/1. Its function is as follows. Catalyzes the reversible conversion of ribose-5-phosphate to ribulose 5-phosphate. This chain is Ribose-5-phosphate isomerase A, found in Shewanella loihica (strain ATCC BAA-1088 / PV-4).